The following is a 372-amino-acid chain: Lipoyl synthase (372 aa).

[4Fe-4S] cluster is bound by residues C37, C42, C48, C63, C67, C70, and S292. Residues 49-281 (WREGTATVML…ERAALEMGFL (233 aa)) form the Radical SAM core domain. The segment at 338 to 372 (LTAELDPDEPRPPVAPAPASASPARLVPAASLIRR) is disordered. Residues 354-372 (APASASPARLVPAASLIRR) show a composition bias toward low complexity.

It belongs to the radical SAM superfamily. Lipoyl synthase family. [4Fe-4S] cluster serves as cofactor.

It is found in the cytoplasm. The enzyme catalyses [[Fe-S] cluster scaffold protein carrying a second [4Fe-4S](2+) cluster] + N(6)-octanoyl-L-lysyl-[protein] + 2 oxidized [2Fe-2S]-[ferredoxin] + 2 S-adenosyl-L-methionine + 4 H(+) = [[Fe-S] cluster scaffold protein] + N(6)-[(R)-dihydrolipoyl]-L-lysyl-[protein] + 4 Fe(3+) + 2 hydrogen sulfide + 2 5'-deoxyadenosine + 2 L-methionine + 2 reduced [2Fe-2S]-[ferredoxin]. Its pathway is protein modification; protein lipoylation via endogenous pathway; protein N(6)-(lipoyl)lysine from octanoyl-[acyl-carrier-protein]: step 2/2. Its function is as follows. Catalyzes the radical-mediated insertion of two sulfur atoms into the C-6 and C-8 positions of the octanoyl moiety bound to the lipoyl domains of lipoate-dependent enzymes, thereby converting the octanoylated domains into lipoylated derivatives. The protein is Lipoyl synthase of Sorangium cellulosum (strain So ce56) (Polyangium cellulosum (strain So ce56)).